A 78-amino-acid chain; its full sequence is Musculoskeletal embryonic nuclear protein 1 (78 aa).

Disordered stretches follow at residues 1-33 (MSQPDPVKKKRPPVKEEDLKGARGNLSKNQEIK) and 45-78 (QMGSAAPSIFSRARTGSETVFEKSKDEPPKSVFG). Residues 6-14 (PVKKKRPPV) carry the Nuclear localization signal motif. The span at 64–78 (VFEKSKDEPPKSVFG) shows a compositional bias: basic and acidic residues.

Belongs to the MUSTN1 family. In terms of tissue distribution, predominantly expressed in heart and skeletal muscle. Detected in skeletal muscle satellite cells where expression increases with cell proliferation.

The protein resides in the nucleus. Promotes the differentiation and proliferation of skeletal muscle satellite cells. This chain is Musculoskeletal embryonic nuclear protein 1 (MUSTN1), found in Gallus gallus (Chicken).